The chain runs to 509 residues: Legumin A (509 aa).

A signal peptide spans 1–21; the sequence is MAINPSLLFLSLLFLFNGCLA. 2 disulfide bridges follow: cysteine 34–cysteine 67 and cysteine 110–cysteine 331. The 235-residue stretch at 39 to 273 folds into the Cupin type-1 1 domain; it reads LRASAPQTRI…AFNVDHDIIR (235 aa). Disordered regions lie at residues 187–248 and 298–325; these read AGNP…ESSS and PRME…QDNG. Positions 212–228 are enriched in acidic residues; that stretch reads EESEEEEGEGEEEEEED. The segment covering 299 to 314 has biased composition (basic and acidic residues); the sequence is RMEEEEREERQQEQRY. In terms of domain architecture, Cupin type-1 2 spans 337 to 486; sequence ENLADPERAD…SYQVSREDAR (150 aa).

The protein belongs to the 11S seed storage protein (globulins) family. As to quaternary structure, hexamer; each subunit is composed of an acidic and a basic chain derived from a single precursor and linked by a disulfide bond.

Its function is as follows. This is a seed storage protein. In Gossypium hirsutum (Upland cotton), this protein is Legumin A (LEGA).